Here is a 59-residue protein sequence, read N- to C-terminus: MNFAKVFVLVAMAVLLLVGQSEAGGLKKLGKKLEGAGKRVFNAAEKALPVVAGAKALGK.

A signal peptide spans 1-23 (MNFAKVFVLVAMAVLLLVGQSEA).

It belongs to the cecropin family.

Its subcellular location is the secreted. Cecropins have lytic and antibacterial activity against several Gram-positive and Gram-negative bacteria. This is Cecropin-C type 2 (CECC2) from Aedes albopictus (Asian tiger mosquito).